Consider the following 465-residue polypeptide: Alpha-2A adrenergic receptor (465 aa).

At 1-48 the chain is on the extracellular side; it reads MFRQEQPLAEGSFAPMGSLQPDAGNSSWNGTEAPGGGTRATPYSLQVT. 2 N-linked (GlcNAc...) asparagine glycosylation sites follow: Asn-25 and Asn-29. Residues 49-74 form a helical membrane-spanning segment; the sequence is LTLVCLAGLLMLFTVFGNVLVIIAVF. Over 75 to 85 the chain is Cytoplasmic; it reads TSRALKAPQNL. Residues 86-111 form a helical membrane-spanning segment; the sequence is FLVSLASADILVATLVIPFSLANEVM. Over 112 to 121 the chain is Extracellular; sequence GYWYFGKVWC. Cys-121 and Cys-203 are oxidised to a cystine. Residues 122–144 traverse the membrane as a helical segment; that stretch reads EIYLALDVLFCTSSIVHLCAISL. Residues 145 to 164 are Cytoplasmic-facing; that stretch reads DRYWSITQAIEYNLKRTPRR. Residues 165–188 form a helical membrane-spanning segment; the sequence is IKAIIVTVWVISAVISFPPLISIE. Residues 189 to 207 lie on the Extracellular side of the membrane; the sequence is KKGAGGGQQPAEPSCKIND. A helical membrane pass occupies residues 208 to 232; sequence QKWYVISSSIGSFFAPCLIMILVYV. The Cytoplasmic portion of the chain corresponds to 233 to 389; the sequence is RIYQIAKRRT…RQNREKRFTF (157 aa). The segment at 242-378 is disordered; it reads TRVPPSRRGP…GGGAKASRWR (137 aa). The span at 313–330 shows a compositional bias: basic and acidic residues; that stretch reads SSEHAERPPGPRRPDRGP. Phosphoserine is present on Ser-346. Positions 353–363 are enriched in gly residues; it reads GAAGPGASGSG. An Omega-N-methylarginine modification is found at Arg-368. A helical membrane pass occupies residues 390-414; sequence VLAVVIGVFVVCWFPFFFTYTLIAV. Topologically, residues 415 to 424 are extracellular; that stretch reads GCPVPSQLFN. The chain crosses the membrane as a helical span at residues 425–445; sequence FFFWFGYCNSSLNPVIYTIFN. Residues 446-465 lie on the Cytoplasmic side of the membrane; the sequence is HDFRRAFKKILCRGDRKRIV. Cys-457 carries the S-palmitoyl cysteine lipid modification.

The protein belongs to the G-protein coupled receptor 1 family. Adrenergic receptor subfamily. ADRA2A sub-subfamily.

The protein resides in the cell membrane. In terms of biological role, alpha-2 adrenergic receptors mediate the catecholamine-induced inhibition of adenylate cyclase through the action of G proteins. The protein is Alpha-2A adrenergic receptor of Mus musculus (Mouse).